The sequence spans 732 residues: Anthranilate synthase (732 aa).

In terms of domain architecture, Glutamine amidotransferase type-1 spans 533–728 (RVLLVDHDDS…MDRLAAGALT (196 aa)). Position 583 to 585 (583 to 585 (GPG)) interacts with L-glutamine. Cys610 acts as the Nucleophile; for GATase activity in catalysis. L-glutamine-binding positions include Gln614 and 660-661 (SL). Active-site for GATase activity residues include His699 and Glu701.

It carries out the reaction chorismate + L-glutamine = anthranilate + pyruvate + L-glutamate + H(+). Its pathway is amino-acid biosynthesis; L-tryptophan biosynthesis; L-tryptophan from chorismate: step 1/5. The polypeptide is Anthranilate synthase (trpE(G)) (Azospirillum brasilense).